The chain runs to 397 residues: MGEEDWSDTQQQPRKRWTLEQLKGGNTFLSQQAGTNKFETQKGMTAVGMPRWNITKDKKQGYIAPDQRSENVLRVQCGTNQYASQKGETPIGASRFQVPKVTYKKEWETILDKEGEKIIPKQAGDYGLASQAGEVSMGGHRNQVALIRGRLPHDRRTHGVLCFQNGTNLFASQTGMSAPPGLGAVRQATQKIEGLELGEDILRRGTEFTPWYSGQNKFATQAGSGGFLKVRDVLPHTVGGKDIEEELKQKSEGIVPLQSGTNKLASQRGMTGFGTPRNTQLRAGWKKEWIEDYEAALKEWEETKPPGSASSVDPFGHYKKKFEERESSRQSEIDSQSVKASEPVEPEPEEEEEEEEEEKIEEPAAKEEEEEEEEEEEEEEEELEEEEEEEEEEEEDE.

6 Calponin-like repeats span residues 29–54 (LSQQ…RWNI), 73–98 (LRVQ…RFQV), 119–144 (IPKQ…RNQV), 161–189 (LCFQ…RQAT), 209–234 (TPWY…RDVL), and 255–280 (VPLQ…RNTQ). Residues 301–397 (EETKPPGSAS…EEEEEEEEDE (97 aa)) are disordered. The segment covering 321–332 (KFEERESSRQSE) has biased composition (basic and acidic residues). Acidic residues-rich tracts occupy residues 344–360 (VEPE…EEKI) and 367–397 (EEEE…EEDE).

Belongs to the calponin family. Expressed in pharyngeal muscle cells (at protein level).

Its function is as follows. Required for pharyngeal pumping. This Caenorhabditis elegans protein is Calponin-like protein clik-2.